Consider the following 414-residue polypeptide: Serine/threonine transporter SstT (414 aa).

A run of 8 helical transmembrane segments spans residues 22–42, 54–74, 89–109, 148–168, 189–209, 223–243, 305–325, and 337–357; these read GLVLGIVVALISAPLQETIGF, IFVKALRAVAPILIFFLVMAA, IIVLYLLGTFLAAFVAVIAGF, AIFKANFIGVLAWSIGLGLAL, IVHVIISFAPFGVFGLVAETL, LLAVLIGTMLFTAFVVNPILV, MAGAAITITILTLAAVHTLGL, and IVAALCACGASGVAGGSLLLI.

It belongs to the dicarboxylate/amino acid:cation symporter (DAACS) (TC 2.A.23) family.

The protein resides in the cell inner membrane. It catalyses the reaction L-serine(in) + Na(+)(in) = L-serine(out) + Na(+)(out). It carries out the reaction L-threonine(in) + Na(+)(in) = L-threonine(out) + Na(+)(out). Its function is as follows. Involved in the import of serine and threonine into the cell, with the concomitant import of sodium (symport system). The polypeptide is Serine/threonine transporter SstT (Haemophilus influenzae (strain PittGG)).